Consider the following 528-residue polypeptide: Linear primary-alkylsulfatase (528 aa).

Positions 42, 44, 46, 47, 151, and 170 each coordinate Zn(2+). Residues 179 to 184 (NVHTLR) and R189 each bind sulfate. H213 is a Zn(2+) binding site. Y275 lines the sulfate pocket.

This sequence belongs to the metallo-beta-lactamase superfamily. Type III sulfatase family. Zn(2+) is required as a cofactor.

The catalysed reaction is a primary linear alkyl sulfate ester + H2O = a primary alcohol + sulfate + H(+). Functionally, alkylsulfatase that cleaves the widely used detergent sodium dodecyl sulfate (SDS), which allows the bacterium to use SDS as a sole carbon or sulfur source. The protein is Linear primary-alkylsulfatase of Pseudomonas sp. (strain ATCC 19151).